The chain runs to 247 residues: Carboxy-S-adenosyl-L-methionine synthase (247 aa).

Residues Tyr39, 64–66, 89–90, 117–118, Asn132, and Arg199 contribute to the S-adenosyl-L-methionine site; these read GCS, DN, and DI.

The protein belongs to the class I-like SAM-binding methyltransferase superfamily. Cx-SAM synthase family. In terms of assembly, homodimer.

It carries out the reaction prephenate + S-adenosyl-L-methionine = carboxy-S-adenosyl-L-methionine + 3-phenylpyruvate + H2O. Its function is as follows. Catalyzes the conversion of S-adenosyl-L-methionine (SAM) to carboxy-S-adenosyl-L-methionine (Cx-SAM). The protein is Carboxy-S-adenosyl-L-methionine synthase of Shigella sonnei (strain Ss046).